The sequence spans 215 residues: Chaperone protein TorD (215 aa).

Belongs to the TorD/DmsD family. TorD subfamily.

It localises to the cytoplasm. Its function is as follows. Involved in the biogenesis of TorA. Acts on TorA before the insertion of the molybdenum cofactor and, as a result, probably favors a conformation of the apoenzyme that is competent for acquiring the cofactor. The chain is Chaperone protein TorD from Aliivibrio fischeri (strain ATCC 700601 / ES114) (Vibrio fischeri).